Reading from the N-terminus, the 165-residue chain is Peptide deformylase (165 aa).

Positions 88 and 130 each coordinate Fe cation. Glu131 is an active-site residue. Position 134 (His134) interacts with Fe cation.

This sequence belongs to the polypeptide deformylase family. Fe(2+) serves as cofactor.

The enzyme catalyses N-terminal N-formyl-L-methionyl-[peptide] + H2O = N-terminal L-methionyl-[peptide] + formate. Removes the formyl group from the N-terminal Met of newly synthesized proteins. Requires at least a dipeptide for an efficient rate of reaction. N-terminal L-methionine is a prerequisite for activity but the enzyme has broad specificity at other positions. The chain is Peptide deformylase from Borreliella burgdorferi (strain ATCC 35210 / DSM 4680 / CIP 102532 / B31) (Borrelia burgdorferi).